Here is a 195-residue protein sequence, read N- to C-terminus: Guanylate kinase (195 aa).

Positions 7–186 (GVLLVLSSPS…SVEEISSILD (180 aa)) constitute a Guanylate kinase-like domain. Position 14 to 21 (14 to 21 (SPSGAGKT)) interacts with ATP.

This sequence belongs to the guanylate kinase family.

It is found in the cytoplasm. It catalyses the reaction GMP + ATP = GDP + ADP. In terms of biological role, essential for recycling GMP and indirectly, cGMP. In Wolbachia sp. subsp. Brugia malayi (strain TRS), this protein is Guanylate kinase.